The chain runs to 168 residues: Ecotin (168 aa).

A signal peptide spans 1–21; it reads MKRLSIAITSLLMAASASTIA. Residues C76 and C113 are joined by a disulfide bond.

It belongs to the protease inhibitor I11 (ecotin) family. Homodimer.

It is found in the periplasm. General inhibitor of pancreatic serine proteases: inhibits chymotrypsin, trypsin, elastases, factor X, kallikrein as well as a variety of other proteases. The polypeptide is Ecotin (Yersinia enterocolitica serotype O:8 / biotype 1B (strain NCTC 13174 / 8081)).